The sequence spans 31 residues: Sarcolipin (31 aa).

Topologically, residues 1–7 (MERSTQE) are cytoplasmic. Residues 8-26 (LFINFTVVLITVLLMWLLV) traverse the membrane as a helical segment. At 27–31 (RSYQY) the chain is on the lumenal side.

It belongs to the sarcolipin family. In terms of assembly, homooligomer. Can also form heterooligomers with other sarcoplasmic/endoplasmic reticulum calcium ATPase (SERCA) regulators ARLN, ERLN, PLN and STRIT1/DWORF. Monomer. Interacts with calcium ATPase ATP2A1/SERCA1. Interacts as a monomer with ATP2A2/SERCA2; the interaction decreases ATP2A2 Ca(2+) affinity. Interacts with VMP1; VMP1 competes with PLN and SLN to prevent them from forming an inhibitory complex with ATP2A2.

It localises to the sarcoplasmic reticulum membrane. Its subcellular location is the endoplasmic reticulum membrane. Functionally, reversibly inhibits the activity of ATP2A1/SERCA1 and ATP2A2/SERCA2 in sarcoplasmic reticulum by decreasing the apparent affinity of the ATPase for Ca(2+). Also inhibits the activity of ATP2A3/SERCA3. Modulates calcium re-uptake during muscle relaxation and plays an important role in calcium homeostasis in muscle. Required for muscle-based, non-shivering thermogenesis. This Rattus norvegicus (Rat) protein is Sarcolipin (Sln).